The chain runs to 204 residues: Urease accessory protein UreG (204 aa).

GTP is bound at residue 12–19 (GPVGSGKT).

The protein belongs to the SIMIBI class G3E GTPase family. UreG subfamily. Homodimer. UreD, UreF and UreG form a complex that acts as a GTP-hydrolysis-dependent molecular chaperone, activating the urease apoprotein by helping to assemble the nickel containing metallocenter of UreC. The UreE protein probably delivers the nickel.

The protein resides in the cytoplasm. Its function is as follows. Facilitates the functional incorporation of the urease nickel metallocenter. This process requires GTP hydrolysis, probably effectuated by UreG. In Pseudomonas paraeruginosa (strain DSM 24068 / PA7) (Pseudomonas aeruginosa (strain PA7)), this protein is Urease accessory protein UreG.